The sequence spans 534 residues: Serine protease vicPa (534 aa).

The signal sequence occupies residues 1–17 (MLCYLLIHILCLQAVLG). Residues Asn-65 and Asn-126 are each glycosylated (N-linked (GlcNAc...) asparagine). The active-site Charge relay system is the Ser-174. Residues Asn-297, Asn-416, and Asn-436 are each glycosylated (N-linked (GlcNAc...) asparagine). Residue Asp-450 is the Charge relay system of the active site.

This sequence belongs to the peptidase S28 family.

The protein operates within mycotoxin biosynthesis. In terms of biological role, serine protease, part of the gene cluster that mediates the biosynthesis of the secondary metabolite victorin, the molecular basis for Victoria blight of oats. Within the pathway, vicPa and vicPb are probably involved in the processing of the vicA1 and vicA2 precursors. The pathway starts with the processing of the precursor vicA1 by several endopeptidases including kexin proteases as well as the cluster-specific S28 family peptidases vicPa and vicPb to produce 7 identical copies of the hexapeptide Gly-Leu-Lys-Leu-Ala-Phe. After being excised from the precursor peptide, the core peptides are cyclized and modified post-translationally by enzymes encoded within the gene cluster. The ustYa family oxidase vicYb is required for the formation of the macrocycle in victorin and the copper amine oxidases (CAOs) vicK1 and vicK2 are responsible for converting victorin to the active form by oxidizing the N-terminal glycyl residue in the peptides to glyoxylate. Relaxed substrate specificity of enzymes in the victorin biosynthetic pathway results in a metabolic grid that produces a set of analogs including victorinines B, C, E or HV-toxin M. The sequence is that of Serine protease vicPa from Bipolaris victoriae (strain FI3) (Victoria blight of oats agent).